We begin with the raw amino-acid sequence, 310 residues long: Forkhead box protein pes-1 (310 aa).

Over residues 1 to 16 (MLPLSISTSPDPASQF) the composition is skewed to polar residues. Disordered regions lie at residues 1–37 (MLPL…GTAK), 58–77 (VSPS…SPAP), 92–126 (KQSS…SNPN), and 217–242 (SLRR…PNPI). The segment covering 17-35 (PTVPDLPTLTPTPSPTSGT) has biased composition (low complexity). A DNA-binding region (fork-head) is located at residues 128-220 (RPAYSYNALI…IGKDCGSLRR (93 aa)). Residues 218–231 (LRRKKNGKPRKYSK) are compositionally biased toward basic residues.

Its subcellular location is the nucleus. The protein localises to the cytoplasm. Its function is as follows. Transcription factor. Plays a role in embryogenesis and later development, perhaps acting redundantly with forkhead protein fkh-2. The sequence is that of Forkhead box protein pes-1 from Caenorhabditis briggsae.